Consider the following 89-residue polypeptide: HssA/B-like protein 15 (89 aa).

It belongs to the hssA/B family.

The protein is HssA/B-like protein 15 (hssl15) of Dictyostelium discoideum (Social amoeba).